We begin with the raw amino-acid sequence, 385 residues long: MGKRDYYEVLGVGKTASEDEIKKAYRKLAMKHHPDRNQGDGAKASEEKFKEAKEAYEMLSDAQKRAAYDQFGHAGVDPNAGGAGFRPGAGGEGYGGFAEAFGDIFGDIFGQQGGGGRRGAGGQQVYRGADLSYAMEITLEEAAHGKESQIRIPTWEECDTCHGSGAKPGTSAKPCTTCHGAGTVHLRQGFFSIQQTCPHCHGSGKIIPEPCTSCNGAGKVKKQKTLEVKIPAGINEGQRIALRGHGEPGTQGGPAGDLYVEIRIKQHEIFERDSDDLHCTVPVPLTTAALGGAIEVPTLSGSAEIELPEGTQHGKTFRLRGKGIKGIRSNYPGDLYCHVSVETPVKLTEHQRKLLKELDESFRKGGDKHSPTSKSWTDRVKDLFK.

The J domain maps to 5-72 (DYYEVLGVGK…QKRAAYDQFG (68 aa)). The tract at residues 26 to 48 (RKLAMKHHPDRNQGDGAKASEEK) is disordered. A compositionally biased stretch (basic and acidic residues) spans 35 to 48 (DRNQGDGAKASEEK). The segment at 145-223 (GKESQIRIPT…CNGAGKVKKQ (79 aa)) adopts a CR-type zinc-finger fold. Cys158, Cys161, Cys175, Cys178, Cys197, Cys200, Cys211, and Cys214 together coordinate Zn(2+). 4 CXXCXGXG motif repeats span residues 158 to 165 (CDTCHGSG), 175 to 182 (CTTCHGAG), 197 to 204 (CPHCHGSG), and 211 to 218 (CTSCNGAG). Residues 362–385 (FRKGGDKHSPTSKSWTDRVKDLFK) form a disordered region.

It belongs to the DnaJ family. In terms of assembly, homodimer. Requires Zn(2+) as cofactor.

It localises to the cytoplasm. In terms of biological role, participates actively in the response to hyperosmotic and heat shock by preventing the aggregation of stress-denatured proteins and by disaggregating proteins, also in an autonomous, DnaK-independent fashion. Unfolded proteins bind initially to DnaJ; upon interaction with the DnaJ-bound protein, DnaK hydrolyzes its bound ATP, resulting in the formation of a stable complex. GrpE releases ADP from DnaK; ATP binding to DnaK triggers the release of the substrate protein, thus completing the reaction cycle. Several rounds of ATP-dependent interactions between DnaJ, DnaK and GrpE are required for fully efficient folding. Also involved, together with DnaK and GrpE, in the DNA replication of plasmids through activation of initiation proteins. The protein is Chaperone protein DnaJ of Leptothrix cholodnii (strain ATCC 51168 / LMG 8142 / SP-6) (Leptothrix discophora (strain SP-6)).